Reading from the N-terminus, the 136-residue chain is Histone H3.2 (136 aa).

A disordered region spans residues methionine 1–arginine 43. Lysine 5 is subject to N6-methylated lysine. Lysine 10 is modified (N6-acetyllysine; alternate). Lysine 10 is modified (N6-methylated lysine; alternate). Serine 11 carries the post-translational modification Phosphoserine. Threonine 12 bears the Phosphothreonine mark. N6-acetyllysine is present on lysine 15. 2 positions are modified to N6-acetyllysine; alternate: lysine 19 and lysine 24. N6-methylated lysine; alternate occurs at positions 19 and 24. Position 28 is an N6-methylated lysine (lysine 28). Phosphoserine is present on serine 29. Lysine 37 carries the post-translational modification N6-methylated lysine.

Belongs to the histone H3 family. The nucleosome is a histone octamer containing two molecules each of H2A, H2B, H3 and H4 assembled in one H3-H4 heterotetramer and two H2A-H2B heterodimers. The octamer wraps approximately 147 bp of DNA. Post-translationally, acetylation is generally linked to gene activation. Can be acetylated to form H3K9ac, H3K14ac, H3K18ac and H3K23ac. H3K9ac could compete with H3K9me and prevent gene silencing. H3K9ac is restricted to euchromatin. In terms of processing, methylated to form mainly H3K4me, H3K9me, H3K18me, H3K23me, H3K27me and H3K36me. H3K4me1/2/3, H3K9me3, H3K27me3 and H3K36me1/2/3 are typical marks for euchromatin, whereas heterochromatic chromocenters are enriched in H3K9me1/2 and H3K27me1/2. H2BK143ub1 is probably prerequisite for H3K4me. Can be phosphorylated to form H3S10ph, H3T11ph and H3S28ph. Expressed in bicellular pollen, root tips, shoot apices, young leaves and ovules.

It localises to the nucleus. The protein localises to the nucleolus. It is found in the chromosome. Functionally, core component of nucleosome. Nucleosomes wrap and compact DNA into chromatin, limiting DNA accessibility to the cellular machineries which require DNA as a template. Histones thereby play a central role in transcription regulation, DNA repair, DNA replication and chromosomal stability. DNA accessibility is regulated via a complex set of post-translational modifications of histones, also called histone code, and nucleosome remodeling. This Lilium longiflorum (Trumpet lily) protein is Histone H3.2 (YAH3).